The following is an 82-amino-acid chain: ATP synthase subunit c (82 aa).

A run of 2 helical transmembrane segments spans residues L7–I27 and F53–F73.

This sequence belongs to the ATPase C chain family. F-type ATPases have 2 components, F(1) - the catalytic core - and F(0) - the membrane proton channel. F(1) has five subunits: alpha(3), beta(3), gamma(1), delta(1), epsilon(1). F(0) has three main subunits: a(1), b(2) and c(10-14). The alpha and beta chains form an alternating ring which encloses part of the gamma chain. F(1) is attached to F(0) by a central stalk formed by the gamma and epsilon chains, while a peripheral stalk is formed by the delta and b chains.

Its subcellular location is the cell inner membrane. Functionally, f(1)F(0) ATP synthase produces ATP from ADP in the presence of a proton or sodium gradient. F-type ATPases consist of two structural domains, F(1) containing the extramembraneous catalytic core and F(0) containing the membrane proton channel, linked together by a central stalk and a peripheral stalk. During catalysis, ATP synthesis in the catalytic domain of F(1) is coupled via a rotary mechanism of the central stalk subunits to proton translocation. In terms of biological role, key component of the F(0) channel; it plays a direct role in translocation across the membrane. A homomeric c-ring of between 10-14 subunits forms the central stalk rotor element with the F(1) delta and epsilon subunits. The sequence is that of ATP synthase subunit c from Acidovorax ebreus (strain TPSY) (Diaphorobacter sp. (strain TPSY)).